Reading from the N-terminus, the 473-residue chain is Cysteine--tRNA ligase (473 aa).

A Zn(2+)-binding site is contributed by cysteine 33. Positions 35–45 (ATVQGQPHIGH) match the 'HIGH' region motif. Positions 211, 236, and 240 each coordinate Zn(2+). The short motif at 267–271 (KMSKS) is the 'KMSKS' region element. Position 270 (lysine 270) interacts with ATP.

Belongs to the class-I aminoacyl-tRNA synthetase family. In terms of assembly, monomer. Requires Zn(2+) as cofactor.

The protein localises to the cytoplasm. The enzyme catalyses tRNA(Cys) + L-cysteine + ATP = L-cysteinyl-tRNA(Cys) + AMP + diphosphate. The sequence is that of Cysteine--tRNA ligase from Mycobacterium leprae (strain Br4923).